The sequence spans 180 residues: MSRKKKSRKPGAAGAPEFVVTRNRTESDVEGRLRKRAKKRKGLKTGSRNSEVNEQKKQSSEQNRDPRLGSKKKIPLIVEPVKKMTKQERRLSAEQELEMLENDAQLNVLLDRIEAGENLGTGLQKYVDEKLDRIEKLMDQLGLLEPEEEEDFTASSAKGSRNDDDLLADFDDINFDDYKG.

Disordered stretches follow at residues Met1–Gln87 and Gly142–Gly180. A compositionally biased stretch (basic and acidic residues) spans Asn23–Arg32. Residues Leu33–Leu43 are compositionally biased toward basic residues. Positions Glu51 to Leu68 are enriched in basic and acidic residues. A compositionally biased stretch (acidic residues) spans Asp165–Gly180.

Belongs to the YihI family. In terms of assembly, interacts with Der.

Functionally, a GTPase-activating protein (GAP) that modifies Der/EngA GTPase function. May play a role in ribosome biogenesis. This Vibrio parahaemolyticus serotype O3:K6 (strain RIMD 2210633) protein is Der GTPase-activating protein YihI.